Here is an 88-residue protein sequence, read N- to C-terminus: Large ribosomal subunit protein bL27 (88 aa).

The protein belongs to the bacterial ribosomal protein bL27 family.

This chain is Large ribosomal subunit protein bL27, found in Mycolicibacterium smegmatis (strain ATCC 700084 / mc(2)155) (Mycobacterium smegmatis).